The sequence spans 172 residues: Large ribosomal subunit protein uL10 (172 aa).

The protein belongs to the universal ribosomal protein uL10 family. In terms of assembly, part of the ribosomal stalk of the 50S ribosomal subunit. The N-terminus interacts with L11 and the large rRNA to form the base of the stalk. The C-terminus forms an elongated spine to which L12 dimers bind in a sequential fashion forming a multimeric L10(L12)X complex.

Its function is as follows. Forms part of the ribosomal stalk, playing a central role in the interaction of the ribosome with GTP-bound translation factors. In Brucella suis (strain ATCC 23445 / NCTC 10510), this protein is Large ribosomal subunit protein uL10.